The following is a 417-amino-acid chain: Membrane protein UL43 (417 aa).

The interval 1-21 (MLRNDSHRAVSPEDGQGRVDD) is disordered. The next 5 membrane-spanning stretches (helical) occupy residues 57–77 (GPYA…LGFM), 90–110 (IYAW…SLGE), 119–139 (APGP…LLVL), 146–166 (LFLL…VGGL), and 175–195 (WWIG…GPGA). Residues 217 to 254 (AGESLSRRPPEDPERPGVPGPPSPPTPQRSHGPPADEV) are disordered. Residues 221–231 (LSRRPPEDPER) show a composition bias toward basic and acidic residues. The span at 232–243 (PGVPGPPSPPTP) shows a compositional bias: pro residues. The next 5 helical transmembrane spans lie at 263-283 (ENVW…VKTV), 291-311 (PGPG…AVAL), 323-343 (LTDP…GLVF), 348-368 (VVVY…VLGL), and 389-409 (GLFF…CPPG).

The protein belongs to the alphaherpesvirinae HHV-1 UL43 family.

The protein localises to the membrane. In Human herpesvirus 1 (strain 17) (HHV-1), this protein is Membrane protein UL43.